Reading from the N-terminus, the 855-residue chain is Serine/threonine-protein kinase HAL5 (855 aa).

Disordered regions lie at residues 1–166 and 214–261; these read MGDE…VERQ and RRNS…GNGT. S17 and S19 each carry phosphoserine. The span at 31-45 shows a compositional bias: polar residues; sequence ISGSNNAAAPSSRPG. Positions 57–74 are enriched in low complexity; sequence IITSNVSSPSISPVHSPV. A phosphoserine mark is found at S68 and S72. The segment covering 94–114 has biased composition (polar residues); sequence LSPSREPSLNSENEMFSQESF. Over residues 125–139 the composition is skewed to basic and acidic residues; sequence LLEREDLQNKKEEKA. S160 carries the phosphoserine modification. Residues 248–258 show a composition bias toward low complexity; sequence GMNSNATNNVG. Residues S273, S277, S324, S333, S336, S358, S391, and S395 each carry the phosphoserine modification. Positions 319–347 are disordered; sequence NKNVDSGDEKDADASVNSGDDGDNDSEAN. 2 disordered regions span residues 401 to 427 and 457 to 497; these read SQTVKKSRTSNLKNGNNDELMKNDGKN and LKSE…SHKP. The segment covering 462-474 has biased composition (polar residues); the sequence is TKGNNGEGRSNSN. Residues 503 to 837 form the Protein kinase domain; it reads GKYIGVVGAG…IEQLLQSSWM (335 aa). ATP-binding positions include 509–517 and K546; that span reads VGAGAYGVV. Residue D688 is the Proton acceptor of the active site.

This sequence belongs to the protein kinase superfamily. CAMK Ser/Thr protein kinase family. NPR/HAL subfamily. HAL5 sub-subfamily.

The catalysed reaction is L-seryl-[protein] + ATP = O-phospho-L-seryl-[protein] + ADP + H(+). It catalyses the reaction L-threonyl-[protein] + ATP = O-phospho-L-threonyl-[protein] + ADP + H(+). Its function is as follows. Protein kinase involved in salt tolerance and pH sensitivity, probably by regulating plasma membrane potential and cation influx. Positively controls the TRK1-TRK2 potassium transport system in response to potassium starvation. Stabilizes TRK1 in the plasma membrane by preventing its vacuolar sorting and degradation. Also stabilizes other plasma membrane nutrient transporters like CAN1, FUR4 and HXT1. May itself be subject to regulation by ARL1. The protein is Serine/threonine-protein kinase HAL5 (HAL5) of Saccharomyces cerevisiae (strain YJM789) (Baker's yeast).